The chain runs to 311 residues: MKVAVLGAAGGIGQALALLLKTQLPAGSKLSLYDIAPVTPGVAVDLSHIPTAVEVKGFAGEDPTAALEGADVVLISAGVARKPGMDRSDLFNINAGIVRNLVEKCAATCPKALIGIITNPVNTTVAIAAEVLKNAGVYDKNRLFGVTTLDVIRSETFVAEAKGLNVADVKVPVIGGHSGVTILPLLSQVEGVSFTDAEVAALTTRIQNAGTEVVEAKAGGGSATLSMGQAACRFGLSLVRGLQGEANVVECAYVDGGSEHAEFFAQPVVLGKNGVEEVLAYGEVSAFEANARDAMLDTLQADIQLGIDFVK.

NAD(+) is bound by residues 7-13 and Asp-34; that span reads GAAGGIG. Residues Arg-81 and Arg-87 each coordinate substrate. NAD(+) is bound by residues Asn-94 and 117 to 119; that span reads ITN. Substrate contacts are provided by Asn-119 and Arg-153. The active-site Proton acceptor is His-177. NAD(+) is bound at residue Met-227.

Belongs to the LDH/MDH superfamily. MDH type 1 family. Homodimer.

The catalysed reaction is (S)-malate + NAD(+) = oxaloacetate + NADH + H(+). Functionally, catalyzes the reversible oxidation of malate to oxaloacetate. This Shewanella pealeana (strain ATCC 700345 / ANG-SQ1) protein is Malate dehydrogenase.